Here is a 471-residue protein sequence, read N- to C-terminus: uncharacterized protein (471 aa).

The next 11 helical transmembrane spans lie at 15–35, 66–86, 89–109, 147–167, 179–199, 210–230, 237–257, 303–323, 353–373, 386–406, and 410–430; these read LWGPPLIILLTGTGLYFTILL, PLQALTSALSSTIGAANIVGV, AIMFGGPGAVFWMWLIALFAM, WLGVFFSVALIVELIPSIMVQ, FSFNKIYAGIGIAFLIGLVVI, EFVVPLMAGAYAGAGLLIVLM, AFFSLVFSNAFTSSSAVGGFA, VIGIVIDTLIICTTTAFIVLA, GYFVSVSLVFFVVSTIMVVIF, LAGHVIKFVYLAAIIIGAAGG, and IWGVLDLALVFIVVPNVIALL.

The protein belongs to the alanine or glycine:cation symporter (AGCS) (TC 2.A.25) family.

The protein resides in the cell membrane. This is an uncharacterized protein from Bacillus subtilis (strain 168).